The chain runs to 198 residues: Holliday junction branch migration complex subunit RuvA (198 aa).

The segment at methionine 1–histidine 63 is domain I. A domain II region spans residues threonine 64–lysine 142. The tract at residues alanine 143–lysine 147 is flexible linker. Residues alanine 148–glycine 198 are domain III.

Belongs to the RuvA family. As to quaternary structure, homotetramer. Forms an RuvA(8)-RuvB(12)-Holliday junction (HJ) complex. HJ DNA is sandwiched between 2 RuvA tetramers; dsDNA enters through RuvA and exits via RuvB. An RuvB hexamer assembles on each DNA strand where it exits the tetramer. Each RuvB hexamer is contacted by two RuvA subunits (via domain III) on 2 adjacent RuvB subunits; this complex drives branch migration. In the full resolvosome a probable DNA-RuvA(4)-RuvB(12)-RuvC(2) complex forms which resolves the HJ.

The protein localises to the cytoplasm. Its function is as follows. The RuvA-RuvB-RuvC complex processes Holliday junction (HJ) DNA during genetic recombination and DNA repair, while the RuvA-RuvB complex plays an important role in the rescue of blocked DNA replication forks via replication fork reversal (RFR). RuvA specifically binds to HJ cruciform DNA, conferring on it an open structure. The RuvB hexamer acts as an ATP-dependent pump, pulling dsDNA into and through the RuvAB complex. HJ branch migration allows RuvC to scan DNA until it finds its consensus sequence, where it cleaves and resolves the cruciform DNA. This Streptococcus pyogenes serotype M12 (strain MGAS2096) protein is Holliday junction branch migration complex subunit RuvA.